The sequence spans 281 residues: 2-dehydro-3-deoxyphosphooctonate aldolase 1 (281 aa).

This sequence belongs to the KdsA family.

Its subcellular location is the cytoplasm. The catalysed reaction is D-arabinose 5-phosphate + phosphoenolpyruvate + H2O = 3-deoxy-alpha-D-manno-2-octulosonate-8-phosphate + phosphate. It functions in the pathway carbohydrate biosynthesis; 3-deoxy-D-manno-octulosonate biosynthesis; 3-deoxy-D-manno-octulosonate from D-ribulose 5-phosphate: step 2/3. The protein operates within bacterial outer membrane biogenesis; lipopolysaccharide biosynthesis. The chain is 2-dehydro-3-deoxyphosphooctonate aldolase 1 (kdsA1) from Pseudomonas putida (strain ATCC 47054 / DSM 6125 / CFBP 8728 / NCIMB 11950 / KT2440).